A 300-amino-acid polypeptide reads, in one-letter code: Bifunctional protein FolD 2 (300 aa).

Residues 166-168 (GRS), Ser191, and Ile232 contribute to the NADP(+) site.

This sequence belongs to the tetrahydrofolate dehydrogenase/cyclohydrolase family. In terms of assembly, homodimer.

It carries out the reaction (6R)-5,10-methylene-5,6,7,8-tetrahydrofolate + NADP(+) = (6R)-5,10-methenyltetrahydrofolate + NADPH. It catalyses the reaction (6R)-5,10-methenyltetrahydrofolate + H2O = (6R)-10-formyltetrahydrofolate + H(+). It participates in one-carbon metabolism; tetrahydrofolate interconversion. Functionally, catalyzes the oxidation of 5,10-methylenetetrahydrofolate to 5,10-methenyltetrahydrofolate and then the hydrolysis of 5,10-methenyltetrahydrofolate to 10-formyltetrahydrofolate. This Roseobacter denitrificans (strain ATCC 33942 / OCh 114) (Erythrobacter sp. (strain OCh 114)) protein is Bifunctional protein FolD 2.